The following is a 234-amino-acid chain: Peroxisomal coenzyme A diphosphatase ndx-8 (234 aa).

A Nudix hydrolase domain is found at 27–162 (EQDAGVLILL…TFLIDEFYMV (136 aa)). Positions 66–90 (GGMMDDEDGQNVRRTAIREAYEEVG) match the Nudix box motif. Positions 84 and 88 each coordinate Mg(2+). Residues 170 to 190 (YPTTYGVTALMCIVVAIGLLG) traverse the membrane as a helical segment. The Microbody targeting signal motif lies at 232–234 (SKI).

The protein belongs to the Nudix hydrolase family. Mg(2+) is required as a cofactor. It depends on Mn(2+) as a cofactor.

The protein resides in the peroxisome membrane. Functionally, coenzyme A diphosphatase which mediates the cleavage of CoA into 3',5'-ADP and 4'-phosphopantetheine. In Caenorhabditis elegans, this protein is Peroxisomal coenzyme A diphosphatase ndx-8 (ndx-8).